The following is a 437-amino-acid chain: UDP-N-acetylmuramate--L-alanine ligase (437 aa).

An ATP-binding site is contributed by 108-114; the sequence is GAHGKTS.

This sequence belongs to the MurCDEF family.

It localises to the cytoplasm. It carries out the reaction UDP-N-acetyl-alpha-D-muramate + L-alanine + ATP = UDP-N-acetyl-alpha-D-muramoyl-L-alanine + ADP + phosphate + H(+). Its pathway is cell wall biogenesis; peptidoglycan biosynthesis. Cell wall formation. In Staphylococcus saprophyticus subsp. saprophyticus (strain ATCC 15305 / DSM 20229 / NCIMB 8711 / NCTC 7292 / S-41), this protein is UDP-N-acetylmuramate--L-alanine ligase.